The chain runs to 313 residues: Protein FixB (313 aa).

255 to 283 contacts FAD; that stretch reads LYLAVGISGQIQHMVGANASQTIFAINKD.

Belongs to the ETF alpha-subunit/FixB family. As to quaternary structure, heterodimer of FixA and FixB.

The protein operates within amine and polyamine metabolism; carnitine metabolism. Required for anaerobic carnitine reduction. May bring reductant to CaiA. The sequence is that of Protein FixB from Escherichia coli (strain SMS-3-5 / SECEC).